The following is a 573-amino-acid chain: Proline--tRNA ligase (573 aa).

Belongs to the class-II aminoacyl-tRNA synthetase family. ProS type 1 subfamily. As to quaternary structure, homodimer.

It localises to the cytoplasm. It carries out the reaction tRNA(Pro) + L-proline + ATP = L-prolyl-tRNA(Pro) + AMP + diphosphate. Functionally, catalyzes the attachment of proline to tRNA(Pro) in a two-step reaction: proline is first activated by ATP to form Pro-AMP and then transferred to the acceptor end of tRNA(Pro). As ProRS can inadvertently accommodate and process non-cognate amino acids such as alanine and cysteine, to avoid such errors it has two additional distinct editing activities against alanine. One activity is designated as 'pretransfer' editing and involves the tRNA(Pro)-independent hydrolysis of activated Ala-AMP. The other activity is designated 'posttransfer' editing and involves deacylation of mischarged Ala-tRNA(Pro). The misacylated Cys-tRNA(Pro) is not edited by ProRS. In Elusimicrobium minutum (strain Pei191), this protein is Proline--tRNA ligase.